The chain runs to 317 residues: Olfactory receptor 10A5 (317 aa).

Residues M1 to S26 lie on the Extracellular side of the membrane. Residue N5 is glycosylated (N-linked (GlcNAc...) asparagine). The helical transmembrane segment at L27–I47 threads the bilayer. Over L48–M55 the chain is Cytoplasmic. Residues L56–L76 form a helical membrane-spanning segment. The Extracellular segment spans residues V77 to T100. C98 and C190 are joined by a disulfide. A helical membrane pass occupies residues Q101–Y121. Over D122–R140 the chain is Cytoplasmic. A helical membrane pass occupies residues T141 to T161. The Extracellular portion of the chain corresponds to T162–I198. A helical membrane pass occupies residues Y199–S218. Residues Y219–A238 are Cytoplasmic-facing. The helical transmembrane segment at F239–T259 threads the bilayer. Residues Y260 to K272 lie on the Extracellular side of the membrane. A helical membrane pass occupies residues K273–L293. The Cytoplasmic segment spans residues R294–P317.

It belongs to the G-protein coupled receptor 1 family. In terms of tissue distribution, expressed in the tongue.

It is found in the cell membrane. Functionally, odorant receptor (Potential). May be involved in taste perception. In Homo sapiens (Human), this protein is Olfactory receptor 10A5 (OR10A5).